The chain runs to 104 residues: Ribonuclease P protein component 4 (104 aa).

Zn(2+) is bound by residues cysteine 63, cysteine 66, cysteine 89, and cysteine 92.

The protein belongs to the eukaryotic/archaeal RNase P protein component 4 family. In terms of assembly, consists of a catalytic RNA component and at least 4-5 protein subunits. Requires Zn(2+) as cofactor.

It is found in the cytoplasm. It carries out the reaction Endonucleolytic cleavage of RNA, removing 5'-extranucleotides from tRNA precursor.. Functionally, part of ribonuclease P, a protein complex that generates mature tRNA molecules by cleaving their 5'-ends. In Methanosphaera stadtmanae (strain ATCC 43021 / DSM 3091 / JCM 11832 / MCB-3), this protein is Ribonuclease P protein component 4.